Reading from the N-terminus, the 340-residue chain is Glycerol-3-phosphate dehydrogenase [NAD(P)+] (340 aa).

NADPH is bound by residues tryptophan 11, arginine 33, and lysine 110. Residues lysine 110, glycine 144, and serine 146 each coordinate sn-glycerol 3-phosphate. Alanine 148 contributes to the NADPH binding site. Residues lysine 199, aspartate 252, serine 262, arginine 263, and asparagine 264 each coordinate sn-glycerol 3-phosphate. The active-site Proton acceptor is the lysine 199. Arginine 263 contacts NADPH. The NADPH site is built by valine 287 and glutamate 289.

Belongs to the NAD-dependent glycerol-3-phosphate dehydrogenase family.

The protein localises to the cytoplasm. It catalyses the reaction sn-glycerol 3-phosphate + NAD(+) = dihydroxyacetone phosphate + NADH + H(+). It carries out the reaction sn-glycerol 3-phosphate + NADP(+) = dihydroxyacetone phosphate + NADPH + H(+). It functions in the pathway membrane lipid metabolism; glycerophospholipid metabolism. In terms of biological role, catalyzes the reduction of the glycolytic intermediate dihydroxyacetone phosphate (DHAP) to sn-glycerol 3-phosphate (G3P), the key precursor for phospholipid synthesis. The chain is Glycerol-3-phosphate dehydrogenase [NAD(P)+] from Polynucleobacter asymbioticus (strain DSM 18221 / CIP 109841 / QLW-P1DMWA-1) (Polynucleobacter necessarius subsp. asymbioticus).